Here is a 184-residue protein sequence, read N- to C-terminus: MATALALRSLYRARPSLRCPPVELPWAPRRGHRLSPADDELYQRTRISLLQREAAQAMYIDSYNSRGFMINGNRVLGPCALLPHSVVQWNVGSHQDITEDSFSLFWLLEPRIEIVVVGTGDRTERLQSQVLQAMRQRGIAVEVQDTPNACATFNFLCHEGRVTGAALIPPPGGTSLTSLGQAAQ.

The protein belongs to the NDUFAF3 family. Interacts with NDUFAF4, NDUFS2 and NDUFS3.

It localises to the nucleus. The protein localises to the mitochondrion inner membrane. Its function is as follows. Essential factor for the assembly of mitochondrial NADH:ubiquinone oxidoreductase complex (complex I). The polypeptide is NADH dehydrogenase [ubiquinone] 1 alpha subcomplex assembly factor 3 (NDUFAF3) (Homo sapiens (Human)).